The sequence spans 298 residues: Tyrosine recombinase XerD (298 aa).

Positions 3–88 (ALDHPLIDQF…GLRGFFRYLL (86 aa)) constitute a Core-binding (CB) domain. A Tyr recombinase domain is found at 109 to 292 (PLPKSLSEAD…AKARLQQLHA (184 aa)). Residues R149, K173, H244, R247, and H270 contribute to the active site. Y279 functions as the O-(3'-phospho-DNA)-tyrosine intermediate in the catalytic mechanism.

Belongs to the 'phage' integrase family. XerD subfamily. Forms a cyclic heterotetrameric complex composed of two molecules of XerC and two molecules of XerD.

It localises to the cytoplasm. Site-specific tyrosine recombinase, which acts by catalyzing the cutting and rejoining of the recombining DNA molecules. The XerC-XerD complex is essential to convert dimers of the bacterial chromosome into monomers to permit their segregation at cell division. It also contributes to the segregational stability of plasmids. The protein is Tyrosine recombinase XerD of Pseudomonas putida (strain ATCC 47054 / DSM 6125 / CFBP 8728 / NCIMB 11950 / KT2440).